The primary structure comprises 325 residues: ATP phosphoribosyltransferase (325 aa).

It belongs to the ATP phosphoribosyltransferase family. Long subfamily. Mg(2+) serves as cofactor.

The protein resides in the cytoplasm. It catalyses the reaction 1-(5-phospho-beta-D-ribosyl)-ATP + diphosphate = 5-phospho-alpha-D-ribose 1-diphosphate + ATP. It functions in the pathway amino-acid biosynthesis; L-histidine biosynthesis; L-histidine from 5-phospho-alpha-D-ribose 1-diphosphate: step 1/9. Its activity is regulated as follows. Feedback inhibited by histidine. Functionally, catalyzes the condensation of ATP and 5-phosphoribose 1-diphosphate to form N'-(5'-phosphoribosyl)-ATP (PR-ATP). Has a crucial role in the pathway because the rate of histidine biosynthesis seems to be controlled primarily by regulation of HisG enzymatic activity. In Bradyrhizobium diazoefficiens (strain JCM 10833 / BCRC 13528 / IAM 13628 / NBRC 14792 / USDA 110), this protein is ATP phosphoribosyltransferase.